The following is a 659-amino-acid chain: Heparin-sulfate lyase (659 aa).

An N-terminal signal peptide occupies residues 1-24 (MTTKIFKRIIVFAVIALSSGNILA). Catalysis depends on Tyr294, which acts as the Proton acceptor.

This sequence belongs to the polysaccharide lyase 12 family.

The protein localises to the periplasm. It carries out the reaction Elimination of sulfate, appears to act on linkages between N-acetyl-D-glucosamine and uronate. Product is an unsaturated sugar.. In terms of biological role, specifically cleaves heparan sulfate-rich regions of acidic polysaccharides. Does not act on N,O-desulfated glucosamine or N-acetyl-O-sulfated glucosamine linkages. Functions in cleaving metazoan heparan sulfate and providing carbon, nitrogen and sulfate sources for microorganisms. This is Heparin-sulfate lyase (hepC) from Pedobacter heparinus (strain ATCC 13125 / DSM 2366 / CIP 104194 / JCM 7457 / NBRC 12017 / NCIMB 9290 / NRRL B-14731 / HIM 762-3).